Consider the following 445-residue polypeptide: ATP-dependent protease ATPase subunit HslU (445 aa).

ATP-binding positions include Ile-17, 59-64 (GVGKTE), Asp-254, Glu-319, and Arg-391.

Belongs to the ClpX chaperone family. HslU subfamily. In terms of assembly, a double ring-shaped homohexamer of HslV is capped on each side by a ring-shaped HslU homohexamer. The assembly of the HslU/HslV complex is dependent on binding of ATP.

It localises to the cytoplasm. In terms of biological role, ATPase subunit of a proteasome-like degradation complex; this subunit has chaperone activity. The binding of ATP and its subsequent hydrolysis by HslU are essential for unfolding of protein substrates subsequently hydrolyzed by HslV. HslU recognizes the N-terminal part of its protein substrates and unfolds these before they are guided to HslV for hydrolysis. The polypeptide is ATP-dependent protease ATPase subunit HslU (Pseudomonas fluorescens (strain Pf0-1)).